Here is a 396-residue protein sequence, read N- to C-terminus: MTINPVSRKVAWLRVVTLAIAAFIFNTTEFVPVGLLSDIAESFHMQTAQVGIMLTIYAWVVAVMSLPFMLLTSQMERRKLLICLFVLFIASHVLSFLAWNFTVLVISRIGIAFAHAIFWSITASLAIRLAPAGKRAQALSLIATGTALAMVLGLPIGRVVGQYFGWRTTFFAIGMGALITLLCLIKLLPKLPSEHSGSLKSLPLLFRRPALMSLYVLTVVVVTAHYTAYSYIEPFVQNVAGLSANFATVLLLILGGAGIIGSLVFGKLGNRHASSLVSIAIALLVICLLLLLPAANSEAHLAILSIFWGIAIMVIGLGMQVKVLALAPDATDVAMALFSGIFNIGIGAGALVGNQVSLHWSMSAIGYIGAIPACAALVWAVLIFRKWPVTLEEQPH.

Helical transmembrane passes span 15–35, 50–70, 81–101, 103–123, 136–156, 169–189, 209–229, 246–266, 275–295, 301–321, 333–353, and 364–384; these read VVTL…PVGL, VGIM…PFML, LICL…AWNF, VLVI…SITA, AQAL…GLPI, TFFA…KLLP, PALM…YTAY, FATV…LVFG, SLVS…LPAA, LAIL…GMQV, VAMA…ALVG, and AIGY…VLIF.

It belongs to the major facilitator superfamily. SotB (TC 2.A.1.2) family.

It is found in the cell inner membrane. Involved in the efflux of sugars. The physiological role may be the reduction of the intracellular concentration of toxic sugars or sugar metabolites. The sequence is that of Probable sugar efflux transporter from Salmonella schwarzengrund (strain CVM19633).